A 445-amino-acid chain; its full sequence is Enolase 2 (445 aa).

Substrate-binding residues include His164 and Glu173. Glu216 serves as the catalytic Proton donor. Mg(2+) is bound by residues Asp251, Glu301, and Asp328. Residues Glu301 and Asp328 each contribute to the substrate site. The active-site Proton acceptor is the Lys353. Residues 380–383 (SHRS) and Lys404 each bind substrate.

Belongs to the enolase family. In terms of assembly, homodimer. Mg(2+) serves as cofactor.

It localises to the cytoplasm. The enzyme catalyses (2R)-2-phosphoglycerate = phosphoenolpyruvate + H2O. Its pathway is carbohydrate degradation; glycolysis; pyruvate from D-glyceraldehyde 3-phosphate: step 4/5. The polypeptide is Enolase 2 (ENO2) (Hevea brasiliensis (Para rubber tree)).